A 270-amino-acid chain; its full sequence is Tryptophan synthase alpha chain (270 aa).

Residues Glu-49 and Asp-60 each act as proton acceptor in the active site.

It belongs to the TrpA family. In terms of assembly, tetramer of two alpha and two beta chains.

The catalysed reaction is (1S,2R)-1-C-(indol-3-yl)glycerol 3-phosphate + L-serine = D-glyceraldehyde 3-phosphate + L-tryptophan + H2O. It participates in amino-acid biosynthesis; L-tryptophan biosynthesis; L-tryptophan from chorismate: step 5/5. The alpha subunit is responsible for the aldol cleavage of indoleglycerol phosphate to indole and glyceraldehyde 3-phosphate. This is Tryptophan synthase alpha chain from Buchnera aphidicola subsp. Diuraphis noxia.